The primary structure comprises 291 residues: Phosphatidylglycerol--prolipoprotein diacylglyceryl transferase (291 aa).

A run of 7 helical transmembrane segments spans residues 21–41, 60–80, 96–116, 130–150, 198–218, 225–245, and 260–280; these read VSLHWYGLMYLVGFVFAMWLA, LLYAGFLGVFLGGRIGYVLFY, WDGGMSFHGGLIGVICVMIWF, FIAPLIPFGLGAGRLGNFING, SQLYELFLEGIVLFIILNLFI, GAVSGLFLIGYGAFRIIVEFF, and ISMGQILSIPMIVAGAAMMIW. R143 is an a 1,2-diacyl-sn-glycero-3-phospho-(1'-sn-glycerol) binding site.

Belongs to the Lgt family.

It is found in the cell inner membrane. The enzyme catalyses L-cysteinyl-[prolipoprotein] + a 1,2-diacyl-sn-glycero-3-phospho-(1'-sn-glycerol) = an S-1,2-diacyl-sn-glyceryl-L-cysteinyl-[prolipoprotein] + sn-glycerol 1-phosphate + H(+). It functions in the pathway protein modification; lipoprotein biosynthesis (diacylglyceryl transfer). Functionally, catalyzes the transfer of the diacylglyceryl group from phosphatidylglycerol to the sulfhydryl group of the N-terminal cysteine of a prolipoprotein, the first step in the formation of mature lipoproteins. The polypeptide is Phosphatidylglycerol--prolipoprotein diacylglyceryl transferase (Cronobacter sakazakii (strain ATCC BAA-894) (Enterobacter sakazakii)).